The chain runs to 446 residues: Ribosomal protein uS12 methylthiotransferase RimO (446 aa).

An MTTase N-terminal domain is found at 6-116 (PNIGFISLGC…VMQQVHKYVP (111 aa)). [4Fe-4S] cluster is bound by residues Cys-15, Cys-51, Cys-80, Cys-148, Cys-152, and Cys-155. Residues 134-375 (LTPKHYAYLK…MQLQQEISAA (242 aa)) form the Radical SAM core domain. Positions 378-446 (QQKVGKVFTV…AYDLYASLIN (69 aa)) constitute a TRAM domain.

It belongs to the methylthiotransferase family. RimO subfamily. Requires [4Fe-4S] cluster as cofactor.

The protein localises to the cytoplasm. It carries out the reaction L-aspartate(89)-[ribosomal protein uS12]-hydrogen + (sulfur carrier)-SH + AH2 + 2 S-adenosyl-L-methionine = 3-methylsulfanyl-L-aspartate(89)-[ribosomal protein uS12]-hydrogen + (sulfur carrier)-H + 5'-deoxyadenosine + L-methionine + A + S-adenosyl-L-homocysteine + 2 H(+). Functionally, catalyzes the methylthiolation of an aspartic acid residue of ribosomal protein uS12. The chain is Ribosomal protein uS12 methylthiotransferase RimO from Pasteurella multocida (strain Pm70).